The chain runs to 145 residues: Cytochrome b (145 aa).

The chain crosses the membrane as a helical span at residues 38 to 58 (FFALHFLLPFVLAALVIMHLI). Residues histidine 42 and histidine 56 each coordinate heme b. Histidine 61 lines the a ubiquinone pocket. A helical transmembrane segment spans residues 85–105 (FVFKDLVTVFIFFIVLSVFVF).

The protein belongs to the cytochrome b family. As to quaternary structure, fungal cytochrome b-c1 complex contains 10 subunits; 3 respiratory subunits, 2 core proteins and 5 low-molecular weight proteins. Cytochrome b-c1 complex is a homodimer. Heme b serves as cofactor.

It localises to the mitochondrion inner membrane. Functionally, component of the ubiquinol-cytochrome c reductase complex (complex III or cytochrome b-c1 complex) that is part of the mitochondrial respiratory chain. The b-c1 complex mediates electron transfer from ubiquinol to cytochrome c. Contributes to the generation of a proton gradient across the mitochondrial membrane that is then used for ATP synthesis. The chain is Cytochrome b (cob) from Aspergillus fumigatus (Neosartorya fumigata).